Here is a 307-residue protein sequence, read N- to C-terminus: Bifunctional protein FolD 3 (307 aa).

NADP(+)-binding positions include 169 to 171 (GRS), S194, and I235.

It belongs to the tetrahydrofolate dehydrogenase/cyclohydrolase family. In terms of assembly, homodimer.

The enzyme catalyses (6R)-5,10-methylene-5,6,7,8-tetrahydrofolate + NADP(+) = (6R)-5,10-methenyltetrahydrofolate + NADPH. The catalysed reaction is (6R)-5,10-methenyltetrahydrofolate + H2O = (6R)-10-formyltetrahydrofolate + H(+). Its pathway is one-carbon metabolism; tetrahydrofolate interconversion. Functionally, catalyzes the oxidation of 5,10-methylenetetrahydrofolate to 5,10-methenyltetrahydrofolate and then the hydrolysis of 5,10-methenyltetrahydrofolate to 10-formyltetrahydrofolate. This Ectopseudomonas mendocina (strain ymp) (Pseudomonas mendocina) protein is Bifunctional protein FolD 3.